The primary structure comprises 775 residues: Mitochondrial 15S rRNA processing factor CCM1 (775 aa).

Residues 1-18 (MLRYARTVRFSQVGNSVR) constitute a mitochondrion transit peptide. Residues 35–65 (HDRKSPSHSLSPISNLPNHNDSSTERARKTL) are disordered. The segment covering 41–55 (SHSLSPISNLPNHND) has biased composition (polar residues). The segment covering 56–65 (SSTERARKTL) has biased composition (basic and acidic residues). 5 PPR repeats span residues 289–323 (PKRT…KIEI), 324–355 (SGMA…MRFQ), 362–396 (GTRA…KIEP), 397–432 (NQQI…NWTP), and 433–467 (TLPT…NTVS).

It belongs to the CCM1 family. As to quaternary structure, binds to mitochondrial small subunit 15S rRNA.

It is found in the mitochondrion. Functionally, regulates mitochondrial small subunit maturation by controlling 15S rRNA 5'-end processing. Localizes to the 5' precursor of the 15S rRNA in a position that is subsequently occupied by mS47 in the mature yeast mtSSU. Uses structure and sequence-specific RNA recognition, binding to a single-stranded region of the precursor and specifically recognizing bases -6 to -1. The exchange of Ccm1 for mS47 is coupled to the irreversible removal of precursor rRNA that is accompanied by conformational changes of the mitoribosomal proteins uS5m and mS26. These conformational changes signal completion of 5'-end rRNA processing through protection of the mature 5'-end of the 15S rRNA and stabilization of mS47. The removal of the 5' precursor together with the dissociation of Ccm1 may be catalyzed by the 5'-3' exoribonuclease Pet127. Involved in the specific removal of group I introns in mitochondrial encoded transcripts. The protein is Mitochondrial 15S rRNA processing factor CCM1 (CCM1) of Scheffersomyces stipitis (strain ATCC 58785 / CBS 6054 / NBRC 10063 / NRRL Y-11545) (Yeast).